The primary structure comprises 957 residues: Glycine dehydrogenase (decarboxylating) (957 aa).

The residue at position 708 (Lys708) is an N6-(pyridoxal phosphate)lysine.

Belongs to the GcvP family. In terms of assembly, the glycine cleavage system is composed of four proteins: P, T, L and H. Requires pyridoxal 5'-phosphate as cofactor.

The enzyme catalyses N(6)-[(R)-lipoyl]-L-lysyl-[glycine-cleavage complex H protein] + glycine + H(+) = N(6)-[(R)-S(8)-aminomethyldihydrolipoyl]-L-lysyl-[glycine-cleavage complex H protein] + CO2. Its function is as follows. The glycine cleavage system catalyzes the degradation of glycine. The P protein binds the alpha-amino group of glycine through its pyridoxal phosphate cofactor; CO(2) is released and the remaining methylamine moiety is then transferred to the lipoamide cofactor of the H protein. The protein is Glycine dehydrogenase (decarboxylating) of Shigella flexneri.